A 790-amino-acid chain; its full sequence is DNA ligase 1 (790 aa).

The N-terminal 64 residues, 1–64, are a transit peptide targeting the mitochondrion; that stretch reads MLAIRSSNYL…AFDALMSNAR (64 aa). The tract at residues 64 to 142 is disordered; sequence RAAAKKKTPQ…TGAKKAKTLS (79 aa). The Nuclear localization signal 1 motif lies at 68–75; that stretch reads KKKTPQTT. Over residues 116-128 the composition is skewed to polar residues; sequence DSANPRSDTSSIA. The segment at 337–346 is interaction with target DNA; it reads KLRLGFSGQT. Glu442 contributes to the ATP binding site. Lys444 functions as the N6-AMP-lysine intermediate in the catalytic mechanism. Positions 449 and 465 each coordinate ATP. Residue Glu497 participates in Mg(2+) binding. Residues 505-512 carry the Nuclear localization signal 2 motif; that stretch reads KKKILPFQ. The interval 518–520 is interaction with target DNA; the sequence is ARK. Mg(2+) is bound at residue Glu596. ATP is bound by residues Lys601, Arg614, and Lys620. A disordered region spans residues 757 to 790; that stretch reads DKKPEEATSSEQIADLYQAQKHNHPSNEVKGDDD. A compositionally biased stretch (basic and acidic residues) spans 781–790; that stretch reads PSNEVKGDDD.

This sequence belongs to the ATP-dependent DNA ligase family. Mg(2+) is required as a cofactor. As to expression, expressed in all vegetative and reproductive tissues.

The protein resides in the mitochondrion. It is found in the nucleus. It catalyses the reaction ATP + (deoxyribonucleotide)n-3'-hydroxyl + 5'-phospho-(deoxyribonucleotide)m = (deoxyribonucleotide)n+m + AMP + diphosphate.. In terms of biological role, essential protein. DNA ligase that seals nicks in double-stranded DNA during DNA replication, DNA recombination and DNA repair. Involved in repair of both single strand breaks (SSBs) and double strand breaks (DSBs). Required in the endosperm for embryogenesis, probably to repair DNA-breaks generated by DME. This chain is DNA ligase 1 (LIG1), found in Arabidopsis thaliana (Mouse-ear cress).